Here is a 1590-residue protein sequence, read N- to C-terminus: Defective chorion protein, FC177 isoform (1590 aa).

A signal peptide spans Met1–Gly19. Disordered regions lie at residues Val23 to Asn60, Ala184 to Pro212, and Pro268 to Tyr294. The segment covering Ala32–Asp41 has biased composition (polar residues). Low complexity predominate over residues Pro268–Ala280. 5 repeat units span residues Gln493–Gln518, Gln519–Gln544, Gln545–Gln570, Gln571–Gln596, and Gln597–Gln622. Positions Gln493–Gln788 are 12 X 26 AA approximate tandem repeats, Glu, Met-rich. Residues Gln623–Gln652 form a 6; approximate repeat. Residues Gln653–Gln680 form a 7; approximate repeat. The 8; approximate repeat unit spans residues Gln681–Glu696. One copy of the 9; approximate repeat lies at Asp697–Gln720. Residues Gln721–Glu733 form a 10; approximate repeat. The stretch at Asn734–Gln758 is one 11; approximate repeat. The stretch at Gln759 to Gln788 is one 12; approximate repeat. Disordered regions lie at residues Gly843–Ala875, Arg944–Val983, Glu1119–Ile1221, Pro1261–Asn1352, Phe1375–Val1515, and Glu1538–Ala1590. The span at Ser957–Gln977 shows a compositional bias: polar residues. Residues Glu1119–Glu1130 show a composition bias toward acidic residues. Residues Gln1131–Val1148 show a composition bias toward basic and acidic residues. Over residues Thr1151–Glu1195 the composition is skewed to low complexity. Positions Gln1205 to Ile1221 are enriched in polar residues. Residues Glu1272–Ala1288 show a composition bias toward basic and acidic residues. The span at Glu1295–Ser1306 shows a compositional bias: acidic residues. Composition is skewed to low complexity over residues Thr1307–Ser1319 and Asp1435–Pro1452. Residues Gln1493–Lys1504 are compositionally biased toward basic residues. Residues Gln1505–Val1515 are compositionally biased toward low complexity. The span at Thr1554–Lys1576 shows a compositional bias: basic residues. Positions Ser1577–Ala1590 are enriched in polar residues.

It localises to the secreted. Its function is as follows. Required for proper assembly of the eggshell. In Drosophila melanogaster (Fruit fly), this protein is Defective chorion protein, FC177 isoform.